The sequence spans 256 residues: MDAKYKVVDVDTFARQLITDKCSELIETENLLPANILHVVKQARDKYFEDPSVKNYEYVKNLFLRTKYMDDSIDYKNFNRRVLLIVFKFALNRGSGYFPSYRELIEVAVKRLNKINPDLKSSPRAMLQHYNECLENLDNPVTDEHHLLTFGKEVATKMFIEAFEFSYASNNEINLTTNKRGSDLFDPIPMPAPAPAPSASLLDNVMNERKRKLQASVTTTPPKRCKLADRPAQTTQDTPRAPQPAPVRAQRPLFTL.

Residues 211 to 256 (RKLQASVTTTPPKRCKLADRPAQTTQDTPRAPQPAPVRAQRPLFTL) are disordered. Over residues 246–256 (PVRAQRPLFTL) the composition is skewed to low complexity.

This is an uncharacterized protein from Orgyia pseudotsugata (Douglas-fir tussock moth).